Reading from the N-terminus, the 305-residue chain is UPF0612 protein C337.02c (305 aa).

2 coiled-coil regions span residues 27-63 and 120-207; these read IERY…MKYE and NDMN…DARS.

This sequence belongs to the UPF0612 family.

The sequence is that of UPF0612 protein C337.02c from Schizosaccharomyces pombe (strain 972 / ATCC 24843) (Fission yeast).